The following is a 268-amino-acid chain: 4-diphosphocytidyl-2-C-methyl-D-erythritol kinase (268 aa).

Residue Lys10 is part of the active site. Residue 101-111 (PTQAGLGGGST) participates in ATP binding. Asp143 is a catalytic residue.

It belongs to the GHMP kinase family. IspE subfamily.

The enzyme catalyses 4-CDP-2-C-methyl-D-erythritol + ATP = 4-CDP-2-C-methyl-D-erythritol 2-phosphate + ADP + H(+). The protein operates within isoprenoid biosynthesis; isopentenyl diphosphate biosynthesis via DXP pathway; isopentenyl diphosphate from 1-deoxy-D-xylulose 5-phosphate: step 3/6. In terms of biological role, catalyzes the phosphorylation of the position 2 hydroxy group of 4-diphosphocytidyl-2C-methyl-D-erythritol. The sequence is that of 4-diphosphocytidyl-2-C-methyl-D-erythritol kinase from Helicobacter pylori (strain ATCC 700392 / 26695) (Campylobacter pylori).